The chain runs to 770 residues: Probable methyltransferase PMT24 (770 aa).

Residues 1 to 17 (MAMGKYSRVDGKKSSGY) are Cytoplasmic-facing. Residues 18–38 (GLTITIVLIVSLCLVGAWMFM) form a helical; Signal-anchor for type II membrane protein membrane-spanning segment. At 39–770 (SSWSAPTESI…EAETIQSAIA (732 aa)) the chain is on the lumenal side. Composition is skewed to basic and acidic residues over residues 54-81 (ERTK…FPDE) and 93-164 (NEEK…KSED). The interval 54 to 223 (ERTKDVDTTK…STGSGAWSTQ (170 aa)) is disordered. 2 N-linked (GlcNAc...) asparagine glycosylation sites follow: Asn-160 and Asn-166. A compositionally biased stretch (polar residues) spans 212 to 223 (ESSTGSGAWSTQ). Residues Asn-244 and Asn-363 are each glycosylated (N-linked (GlcNAc...) asparagine).

Belongs to the methyltransferase superfamily.

The protein localises to the golgi apparatus membrane. The protein is Probable methyltransferase PMT24 of Arabidopsis thaliana (Mouse-ear cress).